We begin with the raw amino-acid sequence, 103 residues long: ATP synthase subunit c (103 aa).

3 consecutive transmembrane segments (helical) span residues 3-23 (FLAL…VSGL), 30-50 (SIAG…IGMG), and 74-94 (MFIA…LALI).

Belongs to the ATPase C chain family. F-type ATPases have 2 components, F(1) - the catalytic core - and F(0) - the membrane proton channel. F(1) has five subunits: alpha(3), beta(3), gamma(1), delta(1), epsilon(1). F(0) has three main subunits: a(1), b(2) and c(10-14). The alpha and beta chains form an alternating ring which encloses part of the gamma chain. F(1) is attached to F(0) by a central stalk formed by the gamma and epsilon chains, while a peripheral stalk is formed by the delta and b chains.

Its subcellular location is the cell inner membrane. F(1)F(0) ATP synthase produces ATP from ADP in the presence of a proton or sodium gradient. F-type ATPases consist of two structural domains, F(1) containing the extramembraneous catalytic core and F(0) containing the membrane proton channel, linked together by a central stalk and a peripheral stalk. During catalysis, ATP synthesis in the catalytic domain of F(1) is coupled via a rotary mechanism of the central stalk subunits to proton translocation. Its function is as follows. Key component of the F(0) channel; it plays a direct role in translocation across the membrane. A homomeric c-ring of between 10-14 subunits forms the central stalk rotor element with the F(1) delta and epsilon subunits. This Helicobacter hepaticus (strain ATCC 51449 / 3B1) protein is ATP synthase subunit c.